The sequence spans 515 residues: Probable cytochrome P450 6d4 (515 aa).

C457 contributes to the heme binding site.

This sequence belongs to the cytochrome P450 family. It depends on heme as a cofactor.

It localises to the endoplasmic reticulum membrane. The protein resides in the microsome membrane. Its function is as follows. May be involved in the metabolism of insect hormones and in the breakdown of synthetic insecticides. This is Probable cytochrome P450 6d4 (Cyp6d4) from Drosophila melanogaster (Fruit fly).